The following is a 601-amino-acid chain: NADH-ubiquinone oxidoreductase chain 5 (601 aa).

17 helical membrane-spanning segments follow: residues 5–25, 37–54, 83–105, 112–129, 134–156, 169–189, 209–231, 240–260, 271–291, 300–320, 323–343, 363–383, 400–420, 451–471, 478–498, 508–528, and 581–601; these read ITSLMTNFCLITTILSLTLSF, YMRNAFIISLLPLIIYID, YCLTFFSIALYITWSIMQFSLWY, TLFFKYLTMFLISMLFFL, LLQLILGWEGMGIMSFLLINWWH, IIYNRIGDTGLIIFMIWSALF, WLPLLGIVLAATGKSAQFMLHPW, TPVSALLHSSTMVVSGVFLLI, MIISIILCLGAMTTLFAALCA, IIAFSTTSQLGLMTVTIGINQ, LAFLHMSTHAFFKALLFLCSA, LILPFTSSCTLISSLALMGMP, MSYVNAWALLSTMLATALTSI, PLIRLTLGSIIFGFIISTFFL, FSIPFNSKILPTIMLILVSSL, FSHMPPLFFPSMSGYFPAIFH, and NYITIFVITILSSLLTSALYF.

This sequence belongs to the complex I subunit 5 family.

It localises to the mitochondrion inner membrane. The enzyme catalyses a ubiquinone + NADH + 5 H(+)(in) = a ubiquinol + NAD(+) + 4 H(+)(out). Its function is as follows. Core subunit of the mitochondrial membrane respiratory chain NADH dehydrogenase (Complex I) that is believed to belong to the minimal assembly required for catalysis. Complex I functions in the transfer of electrons from NADH to the respiratory chain. The immediate electron acceptor for the enzyme is believed to be ubiquinone. This is NADH-ubiquinone oxidoreductase chain 5 (MT-ND5) from Myxine glutinosa (Atlantic hagfish).